We begin with the raw amino-acid sequence, 219 residues long: MTENKTVLYSYWRSSCSWRVRVALAYKKIKYEYKAIHLLKDGGQQKSDEYSKLNPMKAIPTLEIDGHIIGQSLAILEYLEETHPENPLMPKGSYERAIARQMMQIIGSDIQPLQNLKVLGLIAQYSGDDSKKSEWARTVITNGFNGLEKLLEKHSGKFCVGDSVSFADLCLPAQVYNANRFNVDMTPYPNITRVNQHLLTIPEFIEALPQNQPDAEPQC.

The region spanning 4–87 (NKTVLYSYWR…YLEETHPENP (84 aa)) is the GST N-terminal domain. Residues 14–19 (SSCSWR), Gln45, 71–72 (QS), Gln111, and 115–117 (NLK) contribute to the glutathione site. Residues 92 to 217 (GSYERAIARQ…LPQNQPDAEP (126 aa)) enclose the GST C-terminal domain.

Belongs to the GST superfamily. Zeta family. The cofactor is glutathione.

The catalysed reaction is 4-maleylacetoacetate = 4-fumarylacetoacetate. Its pathway is amino-acid degradation; L-phenylalanine degradation; acetoacetate and fumarate from L-phenylalanine: step 5/6. The polypeptide is Maleylacetoacetate isomerase (mai) (Dictyostelium discoideum (Social amoeba)).